Reading from the N-terminus, the 1193-residue chain is Stress response protein nst1 (1193 aa).

7 disordered regions span residues 1–197, 288–368, 422–468, 508–815, 857–942, 966–988, and 1145–1193; these read MVPA…SHNI, QGSF…TRAA, ESLH…EQRM, MEEE…MVAR, MPPG…TQRD, TLSQSLPGATAPGTFPGPARASF, and DNNS…PMGF. Positions 10 to 29 are enriched in low complexity; sequence SPSSTMLNSSSTTAHAAPST. The segment covering 53–63 has biased composition (basic residues); it reads NRKKQKRRQKQ. Over residues 64-73 the composition is skewed to low complexity; it reads AARLAERQLA. Over residues 76 to 90 the composition is skewed to polar residues; the sequence is HVSTDDTTQNGSSHA. The segment covering 91 to 128 has biased composition (basic and acidic residues); sequence NPERYHSDDGGADGPDHEQPTNGDVYDKDGQDSMDAHV. Residues 129–140 show a composition bias toward polar residues; sequence DSQNPQGPNGTE. Positions 146–160 are enriched in basic residues; that stretch reads TGRKSKKKKGKKARN. The span at 169–182 shows a compositional bias: low complexity; it reads TSTPMSTPSVSMSH. The span at 312-321 shows a compositional bias: polar residues; the sequence is GQHTRTQGQF. 2 stretches are compositionally biased toward acidic residues: residues 332–364 and 434–463; these read TEEDDDLEEDYDEEEDDGDEPYSDEELDEEDEE and DDEDYDDEEDEDYDSQEEEDYEEDEMDAMT. Residues 448-659 are a coiled coil; it reads SQEEEDYEED…EEQAKKDTAK (212 aa). Basic and acidic residues-rich tracts occupy residues 508 to 527 and 537 to 675; these read MEEETRNEQRNAKKAREAQK and QAKE…DQAK. Residues 722-740 show a composition bias toward low complexity; that stretch reads RQPSQQDSHSSSPHSQAPS. A compositionally biased stretch (polar residues) spans 741–769; that stretch reads TDPSQASLSPRSMPVSQSSGVASGNSQQG. The segment covering 914–926 has biased composition (low complexity); it reads PISRPSPIKRPSS. Basic and acidic residues predominate over residues 933–942; sequence KGGDRTTQRD. Over residues 972-986 the composition is skewed to low complexity; sequence PGATAPGTFPGPARA. The span at 1182-1193 shows a compositional bias: polar residues; it reads VLRQYSSPPMGF.

The protein belongs to the NST1 family.

It localises to the cytoplasm. Functionally, may act as a negative regulator of salt tolerance. The polypeptide is Stress response protein nst1 (nst1) (Neosartorya fischeri (strain ATCC 1020 / DSM 3700 / CBS 544.65 / FGSC A1164 / JCM 1740 / NRRL 181 / WB 181) (Aspergillus fischerianus)).